The following is a 337-amino-acid chain: 4-hydroxy-3-methylbut-2-enyl diphosphate reductase (337 aa).

Cysteine 25 provides a ligand contact to [4Fe-4S] cluster. (2E)-4-hydroxy-3-methylbut-2-enyl diphosphate contacts are provided by histidine 54 and histidine 87. Residues histidine 54 and histidine 87 each coordinate dimethylallyl diphosphate. Isopentenyl diphosphate is bound by residues histidine 54 and histidine 87. Cysteine 109 provides a ligand contact to [4Fe-4S] cluster. Histidine 137 is a (2E)-4-hydroxy-3-methylbut-2-enyl diphosphate binding site. Histidine 137 contributes to the dimethylallyl diphosphate binding site. Residue histidine 137 coordinates isopentenyl diphosphate. Catalysis depends on glutamate 139, which acts as the Proton donor. Threonine 177 contacts (2E)-4-hydroxy-3-methylbut-2-enyl diphosphate. Cysteine 207 serves as a coordination point for [4Fe-4S] cluster. 4 residues coordinate (2E)-4-hydroxy-3-methylbut-2-enyl diphosphate: serine 235, serine 236, asparagine 237, and serine 280. Residues serine 235, serine 236, asparagine 237, and serine 280 each contribute to the dimethylallyl diphosphate site. Residues serine 235, serine 236, asparagine 237, and serine 280 each coordinate isopentenyl diphosphate.

Belongs to the IspH family. [4Fe-4S] cluster is required as a cofactor.

It carries out the reaction isopentenyl diphosphate + 2 oxidized [2Fe-2S]-[ferredoxin] + H2O = (2E)-4-hydroxy-3-methylbut-2-enyl diphosphate + 2 reduced [2Fe-2S]-[ferredoxin] + 2 H(+). It catalyses the reaction dimethylallyl diphosphate + 2 oxidized [2Fe-2S]-[ferredoxin] + H2O = (2E)-4-hydroxy-3-methylbut-2-enyl diphosphate + 2 reduced [2Fe-2S]-[ferredoxin] + 2 H(+). It functions in the pathway isoprenoid biosynthesis; dimethylallyl diphosphate biosynthesis; dimethylallyl diphosphate from (2E)-4-hydroxy-3-methylbutenyl diphosphate: step 1/1. It participates in isoprenoid biosynthesis; isopentenyl diphosphate biosynthesis via DXP pathway; isopentenyl diphosphate from 1-deoxy-D-xylulose 5-phosphate: step 6/6. Catalyzes the conversion of 1-hydroxy-2-methyl-2-(E)-butenyl 4-diphosphate (HMBPP) into a mixture of isopentenyl diphosphate (IPP) and dimethylallyl diphosphate (DMAPP). Acts in the terminal step of the DOXP/MEP pathway for isoprenoid precursor biosynthesis. In Leifsonia xyli subsp. xyli (strain CTCB07), this protein is 4-hydroxy-3-methylbut-2-enyl diphosphate reductase.